Consider the following 403-residue polypeptide: Aurora kinase A (403 aa).

The tract at residues 1-125 is disordered; that stretch reads MDRSKENCIS…SKQKNEESKK (125 aa). Polar residues-rich tracts occupy residues 27–83 and 91–101; these read VTQQ…QATS and PLNNTQKSKQP. 2 positions are modified to phosphoserine: Ser-41 and Ser-51. Over residues 114–125 the composition is skewed to basic and acidic residues; it reads LASKQKNEESKK. Residues 133 to 383 form the Protein kinase domain; that stretch reads FEIGRPLGKG…LREVLEHPWI (251 aa). ATP-binding positions include Lys-143, Lys-162, and 211 to 213; that span reads EYA. Asp-256 acts as the Proton acceptor in catalysis. Lys-258 is covalently cross-linked (Glycyl lysine isopeptide (Lys-Gly) (interchain with G-Cter in SUMO2)). ATP contacts are provided by residues 260–261 and Asp-274; that span reads EN. An activation segment region spans residues 280–293; that stretch reads HAPSSRRTTLCGTL. Residues Thr-287 and Thr-288 each carry the phosphothreonine modification. Ser-342 carries the post-translational modification Phosphoserine; by PKA and PAK.

The protein belongs to the protein kinase superfamily. Ser/Thr protein kinase family. Aurora subfamily. In terms of assembly, part of a complex composed of NEDD9, AURKA and CTTN; within the complex NEDD9 acts as a scaffold protein and is required for complex formation. Identified in a complex with AUNIP and NIN. Interacts with FBXL7. Interacts with CPEB1, JTB, TACC1, TPX2, PPP2CA, as well as with the protein phosphatase type 1 (PP1) isoforms PPP1CA, PPP1CB and PPP1CC. Also interacts with its substrates ARHGEF2, BORA, KIF2A, PARD3, and p53/TP53. Interaction with BORA promotes phosphorylation of PLK1. Interacts with CIMAP3. Interacts with GADD45A, competing with its oligomerization. Interacts (via C-terminus) with AUNIP (via C-terminus). Interacts with FRY; this interaction facilitates AURKA-mediated PLK1 phosphorylation. Interacts with SIRT2. Interacts with MYCN; interaction is phospho-independent and triggers AURKA activation; AURKA competes with FBXW7 for binding to unphosphorylated MYCN but not for binding to phosphorylated MYCN. Interacts with HNRNPU. Interacts with AAAS. Interacts with KLHL18 and CUL3. Interacts with FOXP1. Interacts with HDAC6; AURKA-mediated phosphorylation of HDAC6 promotes deacetylation of alpha-tubulin. In terms of processing, activated by phosphorylation at Thr-288; this brings about a change in the conformation of the activation segment. Phosphorylation at Thr-288 varies during the cell cycle and is highest during M phase. Autophosphorylated at Thr-288 upon TPX2 binding. Thr-288 can be phosphorylated by several kinases, including PAK and PKA. Protein phosphatase type 1 (PP1) binds AURKA and inhibits its activity by dephosphorylating Thr-288 during mitosis. Phosphorylation at Ser-342 decreases the kinase activity. PPP2CA controls degradation by dephosphorylating Ser-51 at the end of mitosis. Ubiquitinated by the E3 ubiquitin-protein ligase complex SCF(FBXL7) during mitosis, leading to its degradation by the proteasome. Ubiquitinated by CHFR, leading to its degradation by the proteasome. Ubiquitinated by the anaphase-promoting complex (APC), leading to its degradation by the proteasome. Ubiquitinated by the CUL3-KLHL18 ligase leading to its activation at the centrosome which is required for initiating mitotic entry. Ubiquitination mediated by CUL3-KLHL18 ligase does not lead to its degradation by the proteasome. As to expression, highly expressed in testis and weakly in skeletal muscle, thymus and spleen. Also highly expressed in colon, ovarian, prostate, neuroblastoma, breast and cervical cancer cell lines.

The protein localises to the cytoplasm. It localises to the cytoskeleton. Its subcellular location is the microtubule organizing center. The protein resides in the centrosome. It is found in the spindle pole. The protein localises to the centriole. It localises to the cell projection. Its subcellular location is the neuron projection. The protein resides in the cilium. It is found in the cilium basal body. The protein localises to the basolateral cell membrane. It catalyses the reaction L-seryl-[protein] + ATP = O-phospho-L-seryl-[protein] + ADP + H(+). The catalysed reaction is L-threonyl-[protein] + ATP = O-phospho-L-threonyl-[protein] + ADP + H(+). Activation of CDK1, appears to be an upstream event of AURKA activation. Phosphatase inhibitor-2 (PPP1R2) and TPX2 act also as activators. Inactivated by the G2 checkpoint. Inhibited by GADD45A and p53/TP53, and through dephosphorylation by protein phosphatase type 1 (PP1). MLN8054 is also a potent and selective inhibitor. Activated during the early phase of cilia disassembly in the presence of CIMAP3. Inhibited by the small molecule inhibitor VX-680. Mitotic serine/threonine kinase that contributes to the regulation of cell cycle progression. Associates with the centrosome and the spindle microtubules during mitosis and plays a critical role in various mitotic events including the establishment of mitotic spindle, centrosome duplication, centrosome separation as well as maturation, chromosomal alignment, spindle assembly checkpoint, and cytokinesis. Required for normal spindle positioning during mitosis and for the localization of NUMA1 and DCTN1 to the cell cortex during metaphase. Required for initial activation of CDK1 at centrosomes. Phosphorylates numerous target proteins, including ARHGEF2, BORA, BRCA1, CDC25B, DLGP5, HDAC6, KIF2A, LATS2, NDEL1, PARD3, PPP1R2, PLK1, RASSF1, TACC3, p53/TP53 and TPX2. Phosphorylates MCRS1 which is required for MCRS1-mediated kinetochore fiber assembly and mitotic progression. Regulates KIF2A tubulin depolymerase activity. Important for microtubule formation and/or stabilization. Required for normal axon formation. Plays a role in microtubule remodeling during neurite extension. Also acts as a key regulatory component of the p53/TP53 pathway, and particularly the checkpoint-response pathways critical for oncogenic transformation of cells, by phosphorylating and destabilizing p53/TP53. Phosphorylates its own inhibitors, the protein phosphatase type 1 (PP1) isoforms, to inhibit their activity. Inhibits cilia outgrowth. Required for cilia disassembly via phosphorylation of HDAC6 and subsequent deacetylation of alpha-tubulin. Regulates protein levels of the anti-apoptosis protein BIRC5 by suppressing the expression of the SCF(FBXL7) E3 ubiquitin-protein ligase substrate adapter FBXL7 through the phosphorylation of the transcription factor FOXP1. This is Aurora kinase A from Homo sapiens (Human).